The following is a 1102-amino-acid chain: Avirulence protein AvrXa10 (1102 aa).

Disordered stretches follow at residues 1-68 (MDPI…SAGS) and 127-151 (ARPP…PAAQ). Basic residues predominate over residues 130 to 140 (PRAKPAPRRRA). The span at 141–151 (AQPSDASPAAQ) shows a compositional bias: low complexity. 15 Core repeat repeats span residues 288 to 321 (LTPD…QAHG), 322 to 355 (LTPD…QAHG), 356 to 389 (LTPD…QDHG), 390 to 423 (LTPD…QDHG), 424 to 457 (LTPD…QDHG), 458 to 491 (LTPD…QDHG), 492 to 525 (LTPD…QTHG), 526 to 559 (LTPD…QDHG), 560 to 593 (LTPD…QAHG), 594 to 627 (LTPD…QDHG), 628 to 661 (LTPD…QDHG), 662 to 695 (LTPA…QDHG), 696 to 729 (LTPV…QDHG), 730 to 763 (LTPV…QDHG), and 764 to 797 (LTPV…QDHG). A Core repeat 15.5 repeat occupies 798-809 (LTPDQVVAIASN). The Nuclear localization sequence A (NLSA) signature appears at 951-954 (KRVK). Residues 978–990 (DLDAPSPMHEGDQ) show a composition bias toward basic and acidic residues. The tract at residues 978–1021 (DLDAPSPMHEGDQTRASSRKRSRSDRAVTGPSTQQSFEVRVPEQ) is disordered. The Nuclear localization sequence B (NLSB) motif lies at 997–1000 (KRSR). Residues 1034–1037 (KRPR) carry the Nuclear localization sequence C (NLSC) motif. Residues 1063–1093 (WEQDAAPFAGAADDFPAFNEEELAWLMELLP) form an activation domain region.

This sequence belongs to the transcription activator-like effector (TALE) family.

It localises to the secreted. It is found in the host nucleus. Its function is as follows. Avirulence protein. Induces the hypersensitive response (HR)in rice plants carrying the resistance gene Xa10. Activity depends on the presence of the core repeat domains; replacement with repeat domains from other proteins (AvrBs3 of X.euvesicatoria (AC P14727) or AvrXa7 of this organism) does not elicit the HR. Probably acts as a transcription factor in its host plant (rice) to induce plant resistance or disease. The protein is Avirulence protein AvrXa10 of Xanthomonas oryzae pv. oryzae.